A 39-amino-acid chain; its full sequence is Omega-theraphotoxin-Bs1b (39 aa).

Disulfide bonds link Cys4–Cys25, Cys8–Cys31, and Cys17–Cys36.

Belongs to the neurotoxin 12 (Hwtx-2) family. 06 (TXP1) subfamily. In terms of tissue distribution, expressed by the venom gland.

Its subcellular location is the secreted. Inhibits voltage-gated calcium channels (Cav) in rat cerebellar granule cells. Has insecticidal activity. The chain is Omega-theraphotoxin-Bs1b from Brachypelma smithi (Mexican red knee tarantula).